A 222-amino-acid polypeptide reads, in one-letter code: N-(5'-phosphoribosyl)anthranilate isomerase (222 aa).

It belongs to the TrpF family.

It carries out the reaction N-(5-phospho-beta-D-ribosyl)anthranilate = 1-(2-carboxyphenylamino)-1-deoxy-D-ribulose 5-phosphate. It participates in amino-acid biosynthesis; L-tryptophan biosynthesis; L-tryptophan from chorismate: step 3/5. The chain is N-(5'-phosphoribosyl)anthranilate isomerase from Prosthecochloris aestuarii (strain DSM 271 / SK 413).